The primary structure comprises 246 residues: 1-(5-phosphoribosyl)-5-[(5-phosphoribosylamino)methylideneamino] imidazole-4-carboxamide isomerase (246 aa).

Catalysis depends on D8, which acts as the Proton acceptor. The active-site Proton donor is the D131.

Belongs to the HisA/HisF family.

The protein resides in the cytoplasm. The enzyme catalyses 1-(5-phospho-beta-D-ribosyl)-5-[(5-phospho-beta-D-ribosylamino)methylideneamino]imidazole-4-carboxamide = 5-[(5-phospho-1-deoxy-D-ribulos-1-ylimino)methylamino]-1-(5-phospho-beta-D-ribosyl)imidazole-4-carboxamide. It functions in the pathway amino-acid biosynthesis; L-histidine biosynthesis; L-histidine from 5-phospho-alpha-D-ribose 1-diphosphate: step 4/9. This is 1-(5-phosphoribosyl)-5-[(5-phosphoribosylamino)methylideneamino] imidazole-4-carboxamide isomerase from Polaromonas sp. (strain JS666 / ATCC BAA-500).